Here is an 86-residue protein sequence, read N- to C-terminus: Small ribosomal subunit protein uS17 (86 aa).

This sequence belongs to the universal ribosomal protein uS17 family. As to quaternary structure, part of the 30S ribosomal subunit.

In terms of biological role, one of the primary rRNA binding proteins, it binds specifically to the 5'-end of 16S ribosomal RNA. This chain is Small ribosomal subunit protein uS17, found in Helicobacter pylori (strain P12).